A 467-amino-acid polypeptide reads, in one-letter code: UTP--glucose-1-phosphate uridylyltransferase (467 aa).

UTP-binding positions include 83–86 (LNGG), lysine 97, glutamine 160, and glycine 189. 85-86 (GG) is a binding site for substrate. Substrate-binding positions include histidine 190 and 218–220 (NSD). The UTP site is built by aspartate 220 and lysine 358.

This sequence belongs to the UDPGP type 1 family.

The protein localises to the cytoplasm. The enzyme catalyses alpha-D-glucose 1-phosphate + UTP + H(+) = UDP-alpha-D-glucose + diphosphate. Plays a central role as a glucosyl donor in cellular metabolic pathways. The protein is UTP--glucose-1-phosphate uridylyltransferase (UGPA) of Musa acuminata (Banana).